Here is a 95-residue protein sequence, read N- to C-terminus: MIVLQAYIKVKPEKREEFLSEAQSLVQHSRAEEGNAQYDLFEKVGEENTFVMLEKWKDEAAMKFHNETAHFQGFVAKGKELLSAPLDVVRTELSE.

Positions 2–93 (IVLQAYIKVK…APLDVVRTEL (92 aa)) constitute an ABM domain. S24 carries the post-translational modification Phosphoserine.

The protein belongs to the LsrG family.

Functionally, putative monooxygenase that may contribute to the degradation of aromatic compounds. This chain is Putative monooxygenase YcnE (ycnE), found in Bacillus subtilis (strain 168).